Here is a 253-residue protein sequence, read N- to C-terminus: Triosephosphate isomerase (253 aa).

8-10 contributes to the substrate binding site; that stretch reads NWK. His93 (electrophile) is an active-site residue. Catalysis depends on Glu165, which acts as the Proton acceptor. Residues Gly171, Ser210, and 231–232 each bind substrate; that span reads GG.

Belongs to the triosephosphate isomerase family. In terms of assembly, homodimer.

It localises to the cytoplasm. It catalyses the reaction D-glyceraldehyde 3-phosphate = dihydroxyacetone phosphate. It participates in carbohydrate biosynthesis; gluconeogenesis. It functions in the pathway carbohydrate degradation; glycolysis; D-glyceraldehyde 3-phosphate from glycerone phosphate: step 1/1. Functionally, involved in the gluconeogenesis. Catalyzes stereospecifically the conversion of dihydroxyacetone phosphate (DHAP) to D-glyceraldehyde-3-phosphate (G3P). This chain is Triosephosphate isomerase, found in Francisella tularensis subsp. novicida (strain U112).